A 130-amino-acid polypeptide reads, in one-letter code: Hypocretin neuropeptide precursor (130 aa).

The N-terminal stretch at 1-32 is a signal peptide; sequence MNFPSTKVPWAAVTLLLLLLLPPALLSLGVDA. Residue Q33 is modified to Pyrrolidone carboxylic acid. Cystine bridges form between C38–C44 and C39–C46. Residue L65 is modified to Leucine amide. M96 carries the post-translational modification Methionine amide. Positions 97 to 130 are excised as a propeptide; it reads GRRAGAELEPHPCSGRGCPTVTTTALAPRGGSGV.

Belongs to the orexin family. Specific enzymatic cleavages at paired basic residues yield the different active peptides. In terms of tissue distribution, restricted to neuronal cell bodies of the dorsal and lateral hypothalamus.

Its subcellular location is the rough endoplasmic reticulum. The protein localises to the cytoplasmic vesicle. It localises to the synapse. Its function is as follows. Neuropeptides that play a significant role in the regulation of food intake and sleep-wakefulness, possibly by coordinating the complex behavioral and physiologic responses of these complementary homeostatic functions. A broader role in the homeostatic regulation of energy metabolism, autonomic function, hormonal balance and the regulation of body fluids, is also suggested. In terms of biological role, binds to orexin receptors HCRTR1/OX1R and HCRTR2/OX2R with a high affinity. Stimulates food intake. Modulates pituitary luteinizing hormone secretion in an ovarian steroid-dependent manner. Functionally, binds to orexin receptor HCRTR2/OX2R only. Stimulates food intake. Modulates pituitary luteinizing hormone secretion in an ovarian steroid-dependent manner. The polypeptide is Hypocretin neuropeptide precursor (Hcrt) (Mus musculus (Mouse)).